The sequence spans 221 residues: Large ribosomal subunit protein uL3 (221 aa).

This sequence belongs to the universal ribosomal protein uL3 family. As to quaternary structure, part of the 50S ribosomal subunit. Forms a cluster with proteins L14 and L19.

Functionally, one of the primary rRNA binding proteins, it binds directly near the 3'-end of the 23S rRNA, where it nucleates assembly of the 50S subunit. The sequence is that of Large ribosomal subunit protein uL3 from Chlamydia felis (strain Fe/C-56) (Chlamydophila felis).